A 94-amino-acid chain; its full sequence is Neurotoxin LmNaTx45.2 (94 aa).

Positions 1 to 18 (MKLAILSLFLVFQIGVES) are cleaved as a signal peptide. The region spanning 20–86 (KNGFALDHYG…IGDSRKNYCD (67 aa)) is the LCN-type CS-alpha/beta domain. 4 cysteine pairs are disulfide-bonded: Cys34–Cys85, Cys44–Cys63, Cys48–Cys65, and Cys59–Cys85.

The protein belongs to the long (4 C-C) scorpion toxin superfamily. Sodium channel inhibitor family. Beta subfamily. In terms of tissue distribution, expressed by the venom gland.

It localises to the secreted. Functionally, binds voltage-independently at site-4 of sodium channels (Nav) and shift the voltage of activation toward more negative potentials thereby affecting sodium channel activation and promoting spontaneous and repetitive firing. The protein is Neurotoxin LmNaTx45.2 of Lychas mucronatus (Chinese swimming scorpion).